A 75-amino-acid polypeptide reads, in one-letter code: Large ribosomal subunit protein bL31 (75 aa).

Belongs to the bacterial ribosomal protein bL31 family. Type A subfamily. Part of the 50S ribosomal subunit.

Its function is as follows. Binds the 23S rRNA. The protein is Large ribosomal subunit protein bL31 of Zymomonas mobilis subsp. mobilis (strain ATCC 31821 / ZM4 / CP4).